The following is a 251-amino-acid chain: Small ribosomal subunit protein uS2 (251 aa).

The segment at 232–251 is disordered; that stretch reads LQTGEEEMAAAEGESEQVEA. The span at 235-251 shows a compositional bias: acidic residues; sequence GEEEMAAAEGESEQVEA.

The protein belongs to the universal ribosomal protein uS2 family.

This is Small ribosomal subunit protein uS2 from Geobacter metallireducens (strain ATCC 53774 / DSM 7210 / GS-15).